A 740-amino-acid chain; its full sequence is Vertnin (740 aa).

Disordered stretches follow at residues Glu-485–Ile-506, Pro-560–Val-616, and Thr-653–Gly-673. Positions Gln-578–Pro-604 are enriched in basic and acidic residues. A compositionally biased stretch (polar residues) spans Thr-653 to Leu-667.

Belongs to the vertnin family.

It is found in the nucleus. Its function is as follows. Acts as a transcription factor that regulates development of thoracic vertebrae. This is Vertnin (Vrtn) from Mus musculus (Mouse).